The primary structure comprises 88 residues: DASH complex subunit HSK3 (88 aa).

The segment covering 1 to 15 (MSSRGSGANAASRQS) has biased composition (low complexity). The segment at 1 to 24 (MSSRGSGANAASRQSMTASGGAVK) is disordered.

The protein belongs to the DASH complex HSK3 family. In terms of assembly, component of the DASH complex consisting of ASK1, DAD1, DAD2, DAD3, DAD4, DAM1, DUO1, HSK3, SPC19 and SPC34, with a stoichiometry of one copy of each subunit per complex. Multiple DASH complexes oligomerize to form a ring that encircles spindle microtubules and organizes the rod-like NDC80 complexes of the outer kinetochore. DASH complex oligomerization strengthens microtubule attachments. On cytoplasmic microtubules, DASH complexes appear to form patches instead of rings.

It localises to the nucleus. The protein resides in the cytoplasm. The protein localises to the cytoskeleton. It is found in the spindle. Its subcellular location is the chromosome. It localises to the centromere. The protein resides in the kinetochore. Its function is as follows. Component of the DASH complex that connects microtubules with kinetochores and couples microtubule depolymerisation to chromosome movement; it is involved in retrieving kinetochores to the spindle poles before their re-orientation on the spindle in early mitosis and allows microtubule depolymerization to pull chromosomes apart and resist detachment during anaphase. Kinetochores, consisting of a centromere-associated inner segment and a microtubule-contacting outer segment, play a crucial role in chromosome segregation by mediating the physical connection between centromeric DNA and microtubules. Kinetochores also serve as an input point for the spindle assembly checkpoint, which delays anaphase until all chromosomes have bioriented on the mitotic spindle. This chain is DASH complex subunit HSK3, found in Chaetomium thermophilum (strain DSM 1495 / CBS 144.50 / IMI 039719) (Thermochaetoides thermophila).